We begin with the raw amino-acid sequence, 279 residues long: Vitamin B12-binding protein (279 aa).

Residues 1 to 20 (MTFRFLCWLTGLLLCTAAYA) form the signal peptide. The 253-residue stretch at 24–276 (RVISLAPHAT…QLAELKLAPS (253 aa)) folds into the Fe/B12 periplasmic-binding domain. An intrachain disulfide couples Cys-189 to Cys-265.

Belongs to the BtuF family. As to quaternary structure, the complex is composed of two ATP-binding proteins (BtuD), two transmembrane proteins (BtuC) and a solute-binding protein (BtuF).

It localises to the periplasm. Its function is as follows. Part of the ABC transporter complex BtuCDF involved in vitamin B12 import. Binds vitamin B12 and delivers it to the periplasmic surface of BtuC. The polypeptide is Vitamin B12-binding protein (Pectobacterium atrosepticum (strain SCRI 1043 / ATCC BAA-672) (Erwinia carotovora subsp. atroseptica)).